The sequence spans 139 residues: Small ribosomal subunit protein bS16 (139 aa).

The interval 85 to 108 (ESKSGKKPAKKATTKEASAKKPTD) is disordered. Residues 97 to 108 (TTKEASAKKPTD) are compositionally biased toward basic and acidic residues.

Belongs to the bacterial ribosomal protein bS16 family.

This Leuconostoc mesenteroides subsp. mesenteroides (strain ATCC 8293 / DSM 20343 / BCRC 11652 / CCM 1803 / JCM 6124 / NCDO 523 / NBRC 100496 / NCIMB 8023 / NCTC 12954 / NRRL B-1118 / 37Y) protein is Small ribosomal subunit protein bS16.